Reading from the N-terminus, the 153-residue chain is Small ribosomal subunit protein eS19 (153 aa).

Disordered stretches follow at residues 77–99 (YGTS…KGSG) and 113–139 (GYVE…TAGD). Basic and acidic residues predominate over residues 120-133 (NDGRRVTGDGRSLL).

The protein belongs to the eukaryotic ribosomal protein eS19 family. Part of the 30S ribosomal subunit.

Functionally, may be involved in maturation of the 30S ribosomal subunit. This chain is Small ribosomal subunit protein eS19, found in Haloarcula marismortui (strain ATCC 43049 / DSM 3752 / JCM 8966 / VKM B-1809) (Halobacterium marismortui).